Reading from the N-terminus, the 341-residue chain is MGRILRGLAGEGDLRVVAAETTDVVEEARLRHGLSPTATAALGRAMTGALLLAQLLLKTPKERITLRVEGTGPLGGLVVEADAFGHVRGYVKNPRAEVPLREDGKLNVGELVGAGALRVDRSLPSGEVYTSTVPLVSGEIAEDLAHYLWQSEQIPSAVLLGVRVKGEGEVEVAGGVAVQVMPGAREEVLDRLEANLKDLPGLTPLLRERGLEGALEALLAGLGFERTDLRALGYFQNEIPARFRCRCNREKALEALVFFTPEEREDMIVKDGGAEVVCHWCGEVYRFSPEEVRSLVAEVRCPDCGTLWLYPKGDGTLARIEGETCRCGRKVELPSETRPQA.

Intrachain disulfides connect C245/C247 and C278/C281.

This sequence belongs to the HSP33 family. Post-translationally, under oxidizing conditions two disulfide bonds are formed involving the reactive cysteines. Under reducing conditions zinc is bound to the reactive cysteines and the protein is inactive.

Its subcellular location is the cytoplasm. Redox regulated molecular chaperone. Protects both thermally unfolding and oxidatively damaged proteins from irreversible aggregation. Plays an important role in the bacterial defense system toward oxidative stress. The protein is 33 kDa chaperonin of Thermus thermophilus (strain ATCC 27634 / DSM 579 / HB8).